A 123-amino-acid polypeptide reads, in one-letter code: Fluoride-specific ion channel FluC 2 (123 aa).

The next 2 membrane-spanning stretches (helical) occupy residues 1–21 (MTMLWVCLAGGLGAVARFLLD) and 30–50 (VPVPLGTLVINVMGSLLLGLI). Na(+)-binding residues include glycine 74 and threonine 77. A helical membrane pass occupies residues 99-119 (ALHCMGMAIAGVLAAILGLAL).

This sequence belongs to the fluoride channel Fluc/FEX (TC 1.A.43) family.

Its subcellular location is the cell membrane. It carries out the reaction fluoride(in) = fluoride(out). Na(+) is not transported, but it plays an essential structural role and its presence is essential for fluoride channel function. In terms of biological role, fluoride-specific ion channel. Important for reducing fluoride concentration in the cell, thus reducing its toxicity. The protein is Fluoride-specific ion channel FluC 2 of Cutibacterium acnes (strain DSM 16379 / KPA171202) (Propionibacterium acnes).